A 237-amino-acid chain; its full sequence is NAD-dependent protein deacylase (237 aa).

The Deacetylase sirtuin-type domain occupies M1–L235. NAD(+) is bound at residue G8–W28. Substrate is bound by residues Y53 and R56. Residue Q86 to D89 participates in NAD(+) binding. Catalysis depends on H104, which acts as the Proton acceptor. Residues C112, C115, C138, and C140 each contribute to the Zn(2+) site. NAD(+) is bound by residues G177 to S179, N203 to E205, and A221.

It belongs to the sirtuin family. Class III subfamily. Requires Zn(2+) as cofactor.

The protein resides in the cytoplasm. The catalysed reaction is N(6)-acetyl-L-lysyl-[protein] + NAD(+) + H2O = 2''-O-acetyl-ADP-D-ribose + nicotinamide + L-lysyl-[protein]. It catalyses the reaction N(6)-succinyl-L-lysyl-[protein] + NAD(+) + H2O = 2''-O-succinyl-ADP-D-ribose + nicotinamide + L-lysyl-[protein]. NAD-dependent lysine deacetylase and desuccinylase that specifically removes acetyl and succinyl groups on target proteins. Modulates the activities of several proteins which are inactive in their acylated form. This is NAD-dependent protein deacylase from Mycolicibacterium paratuberculosis (strain ATCC BAA-968 / K-10) (Mycobacterium paratuberculosis).